A 529-amino-acid chain; its full sequence is Peptide chain release factor 3 (529 aa).

Residues 11-280 (AKRRTFAIIS…GLVEWAPAPM (270 aa)) enclose the tr-type G domain. Residues 20–27 (SHPDAGKT), 88–92 (DTPGH), and 142–145 (NKLD) each bind GTP.

The protein belongs to the TRAFAC class translation factor GTPase superfamily. Classic translation factor GTPase family. PrfC subfamily.

Its subcellular location is the cytoplasm. Functionally, increases the formation of ribosomal termination complexes and stimulates activities of RF-1 and RF-2. It binds guanine nucleotides and has strong preference for UGA stop codons. It may interact directly with the ribosome. The stimulation of RF-1 and RF-2 is significantly reduced by GTP and GDP, but not by GMP. The protein is Peptide chain release factor 3 of Escherichia coli O8 (strain IAI1).